Consider the following 309-residue polypeptide: Aspartate carbamoyltransferase catalytic subunit (309 aa).

Positions 55 and 56 each coordinate carbamoyl phosphate. Residue Lys-85 participates in L-aspartate binding. Arg-106, His-135, and Gln-138 together coordinate carbamoyl phosphate. L-aspartate-binding residues include Arg-168 and Arg-230. Residues Leu-268 and Pro-269 each coordinate carbamoyl phosphate.

Belongs to the aspartate/ornithine carbamoyltransferase superfamily. ATCase family. In terms of assembly, heterododecamer (2C3:3R2) of six catalytic PyrB chains organized as two trimers (C3), and six regulatory PyrI chains organized as three dimers (R2).

The enzyme catalyses carbamoyl phosphate + L-aspartate = N-carbamoyl-L-aspartate + phosphate + H(+). Its pathway is pyrimidine metabolism; UMP biosynthesis via de novo pathway; (S)-dihydroorotate from bicarbonate: step 2/3. Its function is as follows. Catalyzes the condensation of carbamoyl phosphate and aspartate to form carbamoyl aspartate and inorganic phosphate, the committed step in the de novo pyrimidine nucleotide biosynthesis pathway. This is Aspartate carbamoyltransferase catalytic subunit from Aliivibrio fischeri (strain ATCC 700601 / ES114) (Vibrio fischeri).